A 387-amino-acid chain; its full sequence is Radial spoke protein 14 (387 aa).

8 ARM repeats span residues 24–67 (KALP…ELLS), 69–109 (PVNH…LLAA), 111–150 (EVGA…EAAR), 154–198 (TRRA…TCTQ), 204–244 (GILS…ALAT), 245–286 (REDA…AITI), 289–328 (EGKY…NVAE), and 330–370 (PEAR…QCRF).

It belongs to the flagellar radial spoke RSP14 family.

It localises to the cytoplasm. The protein resides in the cytoskeleton. Its subcellular location is the flagellum axoneme. This chain is Radial spoke protein 14 (RSP14), found in Chlamydomonas reinhardtii (Chlamydomonas smithii).